A 143-amino-acid chain; its full sequence is Peptide methionine sulfoxide reductase B8 (143 aa).

One can recognise a MsrB domain in the interval 18–139 (DEEWRAVLSP…NSVSLKFASA (122 aa)). Zn(2+)-binding residues include Cys-57, Cys-60, Cys-103, and Cys-106. Cys-75 and Cys-128 are joined by a disulfide. Cys-128 (nucleophile) is an active-site residue.

The protein belongs to the MsrB Met sulfoxide reductase family. Zn(2+) serves as cofactor.

The protein localises to the cytoplasm. It is found in the cytosol. It carries out the reaction L-methionyl-[protein] + [thioredoxin]-disulfide + H2O = L-methionyl-(R)-S-oxide-[protein] + [thioredoxin]-dithiol. In terms of biological role, catalyzes the reduction of methionine sulfoxide (MetSO) to methionine in proteins. Plays a protective role against oxidative stress by restoring activity to proteins that have been inactivated by methionine oxidation. MSRB family specifically reduces the MetSO R-enantiomer. The sequence is that of Peptide methionine sulfoxide reductase B8 (MSRB8) from Arabidopsis thaliana (Mouse-ear cress).